A 230-amino-acid polypeptide reads, in one-letter code: Probable C4-dicarboxylate response regulator DctR (230 aa).

The Response regulatory domain maps to 8–124 (RVLLIEDDPM…RLKAALTQYE (117 aa)). Asp-59 is modified (4-aspartylphosphate). The H-T-H motif DNA-binding region spans 183-209 (EEIGRDVGLARVTVRRYLNYLESVGQV).

Phosphorylated by DctS.

It is found in the cytoplasm. Member of the two-component regulatory system DctS/DctR. Essential for expression of DctP. The sequence is that of Probable C4-dicarboxylate response regulator DctR (dctR) from Halalkalibacterium halodurans (strain ATCC BAA-125 / DSM 18197 / FERM 7344 / JCM 9153 / C-125) (Bacillus halodurans).